Here is a 316-residue protein sequence, read N- to C-terminus: MYSKILATGSYLPAQIRTNADLEKMVDTSDEWIFTRSGMKERRIAAADETVATMGAQAAKNALEIANIDHNEIDLIVVGTTTNSHAYPSAACQIQGMLDIQDAIAFDVAAACTGFVYALSVADQFIRSGKIKKALVIGSDLNSRALDETDRSTVVLFGDGAGAVILEASEEQGIISTHLHSSSDTEYMLALPAQKRGDEKSGFIQMQGNATFKLAVGQLSSVVEETLEANNLQKSDLDWLVPHQANIRIIAATAKKLEMDMSQVVLTVEKYGNNSAATVPVALDEAVRDGRIQRGQLLLLEAFGGGWTWGSALVRF.

Residues Cys-112 and His-243 contribute to the active site. The ACP-binding stretch occupies residues 244–248; the sequence is QANIR. Asn-273 is a catalytic residue.

It belongs to the thiolase-like superfamily. FabH family. Homodimer.

The protein resides in the cytoplasm. The enzyme catalyses malonyl-[ACP] + acetyl-CoA + H(+) = 3-oxobutanoyl-[ACP] + CO2 + CoA. It participates in lipid metabolism; fatty acid biosynthesis. Functionally, catalyzes the condensation reaction of fatty acid synthesis by the addition to an acyl acceptor of two carbons from malonyl-ACP. Catalyzes the first condensation reaction which initiates fatty acid synthesis and may therefore play a role in governing the total rate of fatty acid production. Possesses both acetoacetyl-ACP synthase and acetyl transacylase activities. Its substrate specificity determines the biosynthesis of branched-chain and/or straight-chain of fatty acids. This chain is Beta-ketoacyl-[acyl-carrier-protein] synthase III, found in Actinobacillus pleuropneumoniae serotype 5b (strain L20).